The sequence spans 409 residues: Elongation factor Tu (409 aa).

The tr-type G domain occupies 10 to 214; the sequence is KPHVNIGTIG…EVDGYIPQPE (205 aa). The segment at 19-26 is G1; the sequence is GHVDHGKT. GTP is bound at residue 19–26; sequence GHVDHGKT. T26 is a binding site for Mg(2+). Residues 60 to 64 form a G2 region; sequence GITIN. The G3 stretch occupies residues 81 to 84; the sequence is DCPG. GTP contacts are provided by residues 81–85 and 136–139; these read DCPGH and NKQD. The segment at 136–139 is G4; the sequence is NKQD. Residues 174–176 are G5; the sequence is SAL.

This sequence belongs to the TRAFAC class translation factor GTPase superfamily. Classic translation factor GTPase family. EF-Tu/EF-1A subfamily. In terms of assembly, monomer.

It is found in the cytoplasm. It catalyses the reaction GTP + H2O = GDP + phosphate + H(+). Its function is as follows. GTP hydrolase that promotes the GTP-dependent binding of aminoacyl-tRNA to the A-site of ribosomes during protein biosynthesis. This Trichodesmium erythraeum (strain IMS101) protein is Elongation factor Tu.